The primary structure comprises 117 residues: Large ribosomal subunit protein bL20 (117 aa).

It belongs to the bacterial ribosomal protein bL20 family.

In terms of biological role, binds directly to 23S ribosomal RNA and is necessary for the in vitro assembly process of the 50S ribosomal subunit. It is not involved in the protein synthesizing functions of that subunit. The chain is Large ribosomal subunit protein bL20 from Campylobacter lari (strain RM2100 / D67 / ATCC BAA-1060).